A 344-amino-acid polypeptide reads, in one-letter code: 2,3,4,5-tetrahydropyridine-2,6-dicarboxylate N-succinyltransferase (344 aa).

Glu205 is a binding site for Mg(2+). Residue Glu221 is the Acyl-anhydride intermediate of the active site. Residues Arg223, Gly238, Ser241, Ala264, 279–280, Gly287, Lys304, and 317–320 each bind succinyl-CoA; these read EA and RRNS.

This sequence belongs to the type 2 tetrahydrodipicolinate N-succinyltransferase family. As to quaternary structure, homotrimer.

The protein localises to the cytoplasm. The catalysed reaction is (S)-2,3,4,5-tetrahydrodipicolinate + succinyl-CoA + H2O = (S)-2-succinylamino-6-oxoheptanedioate + CoA. The protein operates within amino-acid biosynthesis; L-lysine biosynthesis via DAP pathway; LL-2,6-diaminopimelate from (S)-tetrahydrodipicolinate (succinylase route): step 1/3. Functionally, catalyzes the conversion of the cyclic tetrahydrodipicolinate (THDP) into the acyclic N-succinyl-L-2-amino-6-oxopimelate using succinyl-CoA. In Pseudomonas putida (strain ATCC 47054 / DSM 6125 / CFBP 8728 / NCIMB 11950 / KT2440), this protein is 2,3,4,5-tetrahydropyridine-2,6-dicarboxylate N-succinyltransferase.